We begin with the raw amino-acid sequence, 298 residues long: NADH-cytochrome b5 reductase 2 (298 aa).

Residues 15–38 (FVLPVAAAAVGLASYSFTSSSFIA) traverse the membrane as a helical segment. The FAD-binding FR-type domain occupies 49-153 (DEWIDLKLIS…KGPFVKWKWE (105 aa)). An FAD-binding site is contributed by 156-191 (QFKSIALIGGGTGITPLYQLIHEITKNPADKTQVSL).

The protein belongs to the flavoprotein pyridine nucleotide cytochrome reductase family. FAD serves as cofactor.

The protein localises to the mitochondrion outer membrane. It carries out the reaction 2 Fe(III)-[cytochrome b5] + NADH = 2 Fe(II)-[cytochrome b5] + NAD(+) + H(+). In terms of biological role, may mediate the reduction of outer membrane cytochrome b5. The chain is NADH-cytochrome b5 reductase 2 (MCR1) from Scheffersomyces stipitis (strain ATCC 58785 / CBS 6054 / NBRC 10063 / NRRL Y-11545) (Yeast).